Consider the following 161-residue polypeptide: Probable chemoreceptor glutamine deamidase CheD (161 aa).

The protein belongs to the CheD family.

It catalyses the reaction L-glutaminyl-[protein] + H2O = L-glutamyl-[protein] + NH4(+). Functionally, probably deamidates glutamine residues to glutamate on methyl-accepting chemotaxis receptors (MCPs), playing an important role in chemotaxis. The chain is Probable chemoreceptor glutamine deamidase CheD from Thermococcus kodakarensis (strain ATCC BAA-918 / JCM 12380 / KOD1) (Pyrococcus kodakaraensis (strain KOD1)).